The following is a 492-amino-acid chain: Catalase isozyme 1 (492 aa).

Residues histidine 65 and asparagine 138 contribute to the active site. Tyrosine 348 contributes to the heme binding site.

It belongs to the catalase family. In terms of assembly, homotetramer. Heme serves as cofactor. In terms of tissue distribution, scutella, milky endosperm of immature kernels, leaves and epicotyls.

It localises to the peroxisome. It carries out the reaction 2 H2O2 = O2 + 2 H2O. Occurs in almost all aerobically respiring organisms and serves to protect cells from the toxic effects of hydrogen peroxide. This is Catalase isozyme 1 (CAT1) from Zea mays (Maize).